The primary structure comprises 611 residues: Glutamine--fructose-6-phosphate aminotransferase [isomerizing] (611 aa).

Cys-2 functions as the Nucleophile; for GATase activity in the catalytic mechanism. One can recognise a Glutamine amidotransferase type-2 domain in the interval 2–219 (CGIVGGVSKT…DGDVAMLQRQ (218 aa)). SIS domains are found at residues 287–427 (AAAM…APGA) and 460–601 (WAAR…VDRP). Lys-606 serves as the catalytic For Fru-6P isomerization activity.

In terms of assembly, homodimer.

Its subcellular location is the cytoplasm. The catalysed reaction is D-fructose 6-phosphate + L-glutamine = D-glucosamine 6-phosphate + L-glutamate. Its function is as follows. Catalyzes the first step in hexosamine metabolism, converting fructose-6P into glucosamine-6P using glutamine as a nitrogen source. The chain is Glutamine--fructose-6-phosphate aminotransferase [isomerizing] from Acidithiobacillus ferridurans.